Consider the following 41-residue polypeptide: Photosystem I reaction center subunit IX (41 aa).

A helical membrane pass occupies residues 7–27 (YLSTAPVIALAWMSFTAGLLI).

The protein belongs to the PsaJ family.

It is found in the plastid. The protein resides in the chloroplast thylakoid membrane. Its function is as follows. May help in the organization of the PsaE and PsaF subunits. This Tupiella akineta (Green alga) protein is Photosystem I reaction center subunit IX.